We begin with the raw amino-acid sequence, 357 residues long: NADPH HC-toxin reductase 1 (357 aa).

NADP(+) contacts are provided by residues Arg-40, Lys-47, 68 to 69 (DL), 88 to 90 (VAT), Tyr-178, Lys-182, 207 to 210 (LGLV), and Thr-222. Lys-182 acts as the Proton donor in catalysis.

This sequence belongs to the NAD(P)-dependent epimerase/dehydratase family.

With respect to regulation, activity is sensitive to heat, dependent on NADPH, and inhibited by p-hydroxymercuribenzoate and disulfiram. In terms of biological role, in tandem with Hm2, NADPH-dependent Helminthosporium carbonum (HC) toxin reductase (HCTR), which inactivates HC toxin, a cyclic tetrapeptide produced by the fungus Cochliobolus carbonum to permit infection and acting as an inhibitor of host histone deacetylases (HDACs), thus conferring resistance against C.carbonum race 1 in resistant cultivars (e.g. cv. B73 and cv. Wisconsin 22). Catalyzes the production of 8-hydroxy derivative of HC-toxin via the reduction of the 8-keto group of 2-amino-9,10-epoxy-8-oxo-decanoic acid, an amino acid of the HC-toxin. This is NADPH HC-toxin reductase 1 from Zea mays (Maize).